Here is a 1152-residue protein sequence, read N- to C-terminus: P3N-PIPO polyprotein (1152 aa).

The 146-residue stretch at 292–437 folds into the Peptidase S30 domain; sequence VMNQQTLTAL…HTLTHRMVQY (146 aa). Active-site for P1 proteinase activity residues include H345, D354, and S388. The Involved in interaction with stylet and aphid transmission signature appears at 489–492; sequence KITC. The Involved in virions binding and aphid transmission motif lies at 747–749; that stretch reads PTK. In terms of domain architecture, Peptidase C6 spans 773–895; the sequence is MFVAKDGYCY…ESEMQHYRVG (123 aa). Active-site for helper component proteinase activity residues include C781 and H854.

This sequence belongs to the potyviridae P3N-PIPO polyprotein family. As to quaternary structure, interacts (via PIPO domain) with host PCaP1 protein; this interaction may help to anchor the movement complex to the plasma membrane from which the complex could move to the plasmodesmata. Post-translationally, potyviral RNA is expressed as two polyproteins which undergo post-translational proteolytic processing. Genome polyprotein is processed by NIa-pro, P1 and HC-pro proteinases resulting in the production of at least ten individual proteins. P3N-PIPO is cleaved by P1 and HC-pro proteinases resulting in the production of three individual proteins. The P1 proteinase and the HC-pro cleave only their respective C-termini autocatalytically.

It localises to the host cell junction. The protein resides in the host plasmodesma. The catalysed reaction is Hydrolyzes a Gly-|-Gly bond at its own C-terminus, commonly in the sequence -Tyr-Xaa-Val-Gly-|-Gly, in the processing of the potyviral polyprotein.. In terms of biological role, required for aphid transmission and also has proteolytic activity. Only cleaves a Gly-Gly dipeptide at its own C-terminus. Interacts with virions and aphid stylets. Acts as a suppressor of RNA-mediated gene silencing, also known as post-transcriptional gene silencing (PTGS), a mechanism of plant viral defense that limits the accumulation of viral RNAs. May have RNA-binding activity. Functionally, allows efficient cell to cell propagation, by bypassing the host cell wall barrier. Transports viral genome to neighboring plant cells directly through plasmosdesmata, without any budding. The polypeptide is P3N-PIPO polyprotein (Carthamus tinctorius (Safflower)).